We begin with the raw amino-acid sequence, 287 residues long: tRNA pseudouridine synthase B (287 aa).

Residue Asp38 is the Nucleophile of the active site.

Belongs to the pseudouridine synthase TruB family. Type 1 subfamily.

It catalyses the reaction uridine(55) in tRNA = pseudouridine(55) in tRNA. In terms of biological role, responsible for synthesis of pseudouridine from uracil-55 in the psi GC loop of transfer RNAs. In Aquifex aeolicus (strain VF5), this protein is tRNA pseudouridine synthase B.